Consider the following 396-residue polypeptide: ATP-dependent RNA helicase eIF4A (396 aa).

Residues 22-50 (YSFDDLKLKEELLRGIFGYGFVEPSAIQQ) carry the Q motif motif. The 171-residue stretch at 53-223 (ILPIIEGKDV…SKFMKDPVRI (171 aa)) folds into the Helicase ATP-binding domain. Residue 66-73 (AQSGTGKT) coordinates ATP. The DEAD box motif lies at 171-174 (DEAD). The region spanning 234-395 (GIGQYYVNVE…ELPSSISELF (162 aa)) is the Helicase C-terminal domain.

Belongs to the DEAD box helicase family. eIF4A subfamily. As to quaternary structure, component of the eIF4F complex, which composition varies with external and internal environmental conditions. It is composed of at least eIF4A, eIF4E and eIF4G.

It localises to the cytoplasm. The enzyme catalyses ATP + H2O = ADP + phosphate + H(+). Its function is as follows. ATP-dependent RNA helicase which is a subunit of the eIF4F complex involved in cap recognition and is required for mRNA binding to ribosome. In the current model of translation initiation, eIF4A unwinds RNA secondary structures in the 5'-UTR of mRNAs which is necessary to allow efficient binding of the small ribosomal subunit, and subsequent scanning for the initiator codon. The chain is ATP-dependent RNA helicase eIF4A (TIF1) from Kluyveromyces lactis (strain ATCC 8585 / CBS 2359 / DSM 70799 / NBRC 1267 / NRRL Y-1140 / WM37) (Yeast).